The chain runs to 442 residues: Cyclic 2,3-diphosphoglycerate synthetase (442 aa).

The protein belongs to the cyclic 2,3-diphosphoglycerate synthetase family.

It is found in the cytoplasm. The catalysed reaction is (2R)-2,3-bisphosphoglycerate + ATP + H(+) = cyclic (2R)-2,3-bisphosphoglycerate + ADP + phosphate. In terms of biological role, catalyzes the formation of cyclic 2,3-diphosphoglycerate (cDPG) by formation of an intramolecular phosphoanhydride bond at the expense of ATP. The sequence is that of Cyclic 2,3-diphosphoglycerate synthetase from Rubrobacter xylanophilus (strain DSM 9941 / JCM 11954 / NBRC 16129 / PRD-1).